The primary structure comprises 140 residues: Nucleoside diphosphate kinase (140 aa).

Residues K11, F59, R87, T93, R104, and N114 each coordinate ATP. H117 (pros-phosphohistidine intermediate) is an active-site residue.

Belongs to the NDK family. Homotetramer. Mg(2+) is required as a cofactor.

The protein resides in the cytoplasm. It carries out the reaction a 2'-deoxyribonucleoside 5'-diphosphate + ATP = a 2'-deoxyribonucleoside 5'-triphosphate + ADP. It catalyses the reaction a ribonucleoside 5'-diphosphate + ATP = a ribonucleoside 5'-triphosphate + ADP. Major role in the synthesis of nucleoside triphosphates other than ATP. The ATP gamma phosphate is transferred to the NDP beta phosphate via a ping-pong mechanism, using a phosphorylated active-site intermediate. This chain is Nucleoside diphosphate kinase, found in Rhizobium etli (strain ATCC 51251 / DSM 11541 / JCM 21823 / NBRC 15573 / CFN 42).